Here is a 339-residue protein sequence, read N- to C-terminus: Deoxyhypusine hydroxylase (339 aa).

2 HEAT-like PBS-type repeats span residues 71 to 97 (LKHE…VVKN) and 104 to 130 (CRHE…LRDD). 4 residues coordinate Fe cation: His73, Glu74, His106, and Glu107. Residues 159–183 (EKLKPSDFTSIDPAPPLPMASSQPS) form a disordered region. HEAT-like PBS-type repeat units follow at residues 200–233 (QRYR…GLKD), 238–264 (FRHE…TLSD), and 271–298 (VRHE…FLND). Residues His240, Glu241, His273, and Glu274 each contribute to the Fe cation site.

It belongs to the deoxyhypusine hydroxylase family. Fe(2+) is required as a cofactor.

The protein localises to the cytoplasm. Its subcellular location is the nucleus. The catalysed reaction is [eIF5A protein]-deoxyhypusine + AH2 + O2 = [eIF5A protein]-hypusine + A + H2O. Its pathway is protein modification; eIF5A hypusination. Catalyzes the hydroxylation of the N(6)-(4-aminobutyl)-L-lysine intermediate to form hypusine, an essential post-translational modification only found in mature eIF-5A factor. This chain is Deoxyhypusine hydroxylase (lia1), found in Aspergillus oryzae (strain ATCC 42149 / RIB 40) (Yellow koji mold).